Consider the following 393-residue polypeptide: Iripin-5 (393 aa).

The N-terminal stretch at 1–16 (MKTLIVLMCSLVVVWA) is a signal peptide. Asn-198 and Asn-245 each carry an N-linked (GlcNAc...) asparagine glycan.

The protein belongs to the serpin family. Highly expressed in female salivary gland during blood feeding. Expressed in female midgut and ovary during blood feeding.

It is found in the secreted. Its function is as follows. Serine protease inhibitor that modulates blood feeding of ticks on vertebrate species. Inhibits host neutrophil elastase (ELANE) and proteinase 3/myeloblastin (PRTN3). Moderately inhibits host chymase, cathepsin G (CTSG), trypsin and alpha-chymotrypsin. Decreases host neutrophil migration. Decreases nitric oxide production by host macrophages. Decreases host complement activity. This chain is Iripin-5, found in Ixodes ricinus (Common tick).